We begin with the raw amino-acid sequence, 299 residues long: GTPase Era (299 aa).

The region spanning K4–E171 is the Era-type G domain. The segment at G12–S19 is G1. GTP is bound at residue G12–S19. The segment at Q38–N42 is G2. Residues D59–G62 form a G3 region. Residues D59–I63 and N121–D124 each bind GTP. Residues N121 to D124 form a G4 region. A G5 region spans residues I150–A152. A KH type-2 domain is found at T202 to K280.

The protein belongs to the TRAFAC class TrmE-Era-EngA-EngB-Septin-like GTPase superfamily. Era GTPase family. Monomer.

The protein resides in the cytoplasm. Its subcellular location is the cell membrane. In terms of biological role, an essential GTPase that binds both GDP and GTP, with rapid nucleotide exchange. Plays a role in 16S rRNA processing and 30S ribosomal subunit biogenesis and possibly also in cell cycle regulation and energy metabolism. The protein is GTPase Era of Streptococcus uberis (strain ATCC BAA-854 / 0140J).